The chain runs to 226 residues: 2-C-methyl-D-erythritol 4-phosphate cytidylyltransferase (226 aa).

The protein belongs to the IspD/TarI cytidylyltransferase family. IspD subfamily.

It carries out the reaction 2-C-methyl-D-erythritol 4-phosphate + CTP + H(+) = 4-CDP-2-C-methyl-D-erythritol + diphosphate. Its pathway is isoprenoid biosynthesis; isopentenyl diphosphate biosynthesis via DXP pathway; isopentenyl diphosphate from 1-deoxy-D-xylulose 5-phosphate: step 2/6. Functionally, catalyzes the formation of 4-diphosphocytidyl-2-C-methyl-D-erythritol from CTP and 2-C-methyl-D-erythritol 4-phosphate (MEP). The polypeptide is 2-C-methyl-D-erythritol 4-phosphate cytidylyltransferase (Microcystis aeruginosa (strain NIES-843 / IAM M-2473)).